Consider the following 211-residue polypeptide: Histidine biosynthesis bifunctional protein HisIE (211 aa).

Residues 1 to 122 (MSVKAAEVSS…DPQEESQMVW (122 aa)) are phosphoribosyl-AMP cyclohydrolase. The interval 123 to 211 (LHQLEQLLAA…VINKLKERHK (89 aa)) is phosphoribosyl-ATP pyrophosphohydrolase.

The protein in the N-terminal section; belongs to the PRA-CH family. It in the C-terminal section; belongs to the PRA-PH family.

The protein resides in the cytoplasm. The enzyme catalyses 1-(5-phospho-beta-D-ribosyl)-ATP + H2O = 1-(5-phospho-beta-D-ribosyl)-5'-AMP + diphosphate + H(+). The catalysed reaction is 1-(5-phospho-beta-D-ribosyl)-5'-AMP + H2O = 1-(5-phospho-beta-D-ribosyl)-5-[(5-phospho-beta-D-ribosylamino)methylideneamino]imidazole-4-carboxamide. Its pathway is amino-acid biosynthesis; L-histidine biosynthesis; L-histidine from 5-phospho-alpha-D-ribose 1-diphosphate: step 2/9. It participates in amino-acid biosynthesis; L-histidine biosynthesis; L-histidine from 5-phospho-alpha-D-ribose 1-diphosphate: step 3/9. The protein is Histidine biosynthesis bifunctional protein HisIE of Vibrio vulnificus (strain YJ016).